We begin with the raw amino-acid sequence, 183 residues long: Protein Dr1 (183 aa).

The Histone-fold domain maps to 19-82 (TLPRASINKI…INAEHVLEAL (64 aa)). A repression of TATA-containing promoters region spans residues 92–183 (QEAEAVLHDC…DDDDDDDDDY (92 aa)). Residues 155-183 (AMVQRPPLADGSVASKPSEDDDDDDDDDY) form a disordered region. The span at 173–183 (EDDDDDDDDDY) shows a compositional bias: acidic residues.

It belongs to the NC2 beta/DR1 family. In terms of assembly, component of the Ada2a-containing (ATAC) complex composed of at least Ada2a, Atac1, Hcf, Ada3, Gcn5, Mocs2B, Charac-14, Atac3, Atac2, NC2beta and wds. Homodimer. Interacts with NC2-alpha/Drap1 to form the dNC2 complex.

It is found in the nucleus. In terms of biological role, bifunctional basic transcription factor. Activates transcription of DPE (Downstream Promoter Element) containing promoters while repressing transcription of promoters which contain TATA elements. Together with Chrac-14, promotes nucleosome sliding of ATP-dependent nucleosome remodeling complexes. In Drosophila melanogaster (Fruit fly), this protein is Protein Dr1 (NC2beta).